A 3564-amino-acid chain; its full sequence is Sushi, von Willebrand factor type A, EGF and pentraxin domain-containing protein 1 (3564 aa).

Residues 1–17 form the signal peptide; it reads MWTRLAFCCWALALVSG. In terms of domain architecture, VWFA spans 84-265; sequence ELVFLVDESS…LARRALHEDL (182 aa). Residue N187 is glycosylated (N-linked (GlcNAc...) asparagine). Sushi domains follow at residues 377–436, 437–496, and 497–561; these read VHCP…FCRV, RTCP…RCVE, and RHCA…VCKD. 6 disulfide bridges follow: C379–C421, C407–C434, C439–C481, C467–C494, C499–C544, and C530–C559. HYR domains follow at residues 560-644 and 645-724; these read KDVE…KVID and VEPP…VIKG. The 65-residue stretch at 725–789 folds into the Sushi 4 domain; sequence SPCEVPFTPV…YSTEWPDCAI (65 aa). 20 disulfide bridges follow: C727/C769, C753/C787, C1192/C1203, C1197/C1212, C1214/C1223, C1230/C1241, C1235/C1250, C1252/C1261, C1268/C1279, C1273/C1288, C1290/C1299, C1306/C1317, C1311/C1326, C1328/C1337, C1344/C1355, C1349/C1364, C1366/C1375, C1382/C1393, C1387/C1402, and C1404/C1413. One can recognise an EGF-like 1 domain in the interval 1188–1224; sequence VFHECFLNPCHNSGTCQQLGRGYVCLCPPGYTGLKCE. Residues 1226–1262 enclose the EGF-like 2; calcium-binding domain; the sequence is DIDECSSLPCLNGGICRDKVGGFTCECSSGYTGQICE. The 37-residue stretch at 1264–1300 folds into the EGF-like 3; calcium-binding domain; that stretch reads NINECSSSPCLNKGTCTDGLASYRCTCVSGYVGVHCE. One can recognise an EGF-like 4; calcium-binding domain in the interval 1302-1338; that stretch reads DVNECQSSPCLNNAVCKDQVGGFSCKCPPGFLGTRCE. Residues 1340 to 1376 enclose the EGF-like 5; calcium-binding domain; the sequence is NVDECLSQPCQNGATCKDGANSFRCQCPAGFTGPHCE. In terms of domain architecture, EGF-like 6; calcium-binding spans 1378–1414; the sequence is NINECQSNPCRNQATCVDELNSYSCKCRPGFSGRRCE. One can recognise a Pentraxin (PTX) domain in the interval 1419 to 1623; sequence SGFNLDFEVS…VKVDSSSIFC (205 aa). Sushi domains lie at 1624-1682 and 1683-1740; these read SDCP…HCER and IRCG…SCLD. 35 disulfide bridges follow: C1626/C1667, C1653/C1680, C1685/C1725, C1711/C1738, C1744/C1756, C1750/C1765, C1767/C1778, C1784/C1824, C1810/C1837, C1842/C1882, C1868/C1895, C1900/C1940, C1926/C1953, C1958/C1998, C1984/C2011, C2016/C2056, C2042/C2073, C2078/C2121, C2107/C2136, C2141/C2181, C2167/C2194, C2199/C2240, C2226/C2254, C2259/C2299, C2285/C2313, C2318/C2358, C2344/C2371, C2376/C2417, C2403/C2430, C2435/C2475, C2461/C2488, C2493/C2533, C2519/C2546, C2551/C2591, and C2577/C2603. Residues 1740-1779 enclose the EGF-like 7; calcium-binding domain; it reads DVDECAVGSDCSEHASCLNTNGSYICSCKPPYTGDGKNCA. N-linked (GlcNAc...) asparagine glycosylation occurs at N1760. Sushi domains are found at residues 1776–1839, 1840–1897, 1898–1955, 1956–2013, 2014–2075, 2076–2138, 2139–2196, 2197–2256, 2257–2315, 2316–2373, 2374–2432, 2433–2490, 2491–2548, and 2549–2605; these read KNCA…SCEA, ISCG…VCEL, VKCS…SCQL, VSCG…QCLA, VSCD…RCIA, HFCE…QCIP, VRCG…TCHP, VSCN…SCTP, LNCG…KCVP, TKCA…VCKL, VLCQ…ECVP, VECP…MCRP, IECP…SCNA, and IHCS…TCVP. The tract at residues 2634 to 2641 is important for the interaction with integrin ITGA9:ITGB1; sequence DMMEVPYL. 14 consecutive Sushi domains span residues 2659-2708, 2709-2766, 2767-2824, 2825-2882, 2883-2940, 2941-2998, 2999-3054, 3055-3112, 3113-3171, 3172-3231, 3232-3289, 3290-3347, 3348-3406, and 3407-3463; these read EESL…SCIS, IECD…RCEV, ISCS…VCLP, VDCG…SCVP, VRCP…ICKP, ATCG…SCLP, CTCS…LCEH, ADCG…TCEP, VSCG…NCSP, KTCP…SCIP, VVCG…VCRE, SRCE…LCKP, NPCP…RCEK, and ISCG…ICRA. 33 disulfide bridges follow: C2679/C2706, C2711/C2751, C2737/C2764, C2769/C2809, C2795/C2822, C2827/C2867, C2853/C2880, C2885/C2925, C2911/C2938, C2943/C2983, C2969/C2996, C3001/C3040, C3026/C3052, C3057/C3097, C3083/C3110, C3115/C3156, C3141/C3169, C3174/C3214, C3200/C3229, C3234/C3274, C3260/C3287, C3292/C3332, C3318/C3345, C3350/C3391, C3377/C3404, C3409/C3449, C3435/C3461, C3497/C3507, C3501/C3513, C3515/C3524, C3529/C3539, C3533/C3545, and C3547/C3556. EGF-like domains follow at residues 3493–3525 and 3526–3557; these read EEPICILPCLNGGRCVAPYRCDCPAGWTGSRCH and TATCQSPCLNGGKCVRPNRCHCLSSWTGHDCS.

Interacts (via Sushi domain 21) with ITGA9:ITGB1; thereby inhibits Ca(2+) intracellular signaling and as a result represses vasocontraction. Interacts (via Sushi domain 21) with ITGA4:ITGB1; thereby inhibits Ca(2+) intracellular signaling and as a result represses vasocontraction. Interacts with ANGPT1 and ANGPT2. Interacts with PEAR1 (via extracellular domain). Interacts with HSPG2, TLN1, FN1, COPA, CCT2, IQGAP1, LAMC1 and NID1. Interacts (via C-terminus) with TIE1.

The protein resides in the secreted. It is found in the nucleus. It localises to the cytoplasm. Its subcellular location is the membrane. In terms of biological role, required for morphological development, cell alignment and migration of lymphatic endothelial cells during embryonic development, potentially via modulation of ANGPT2-TIE1 signaling and subsequent activation of FOXC2 transcription. Required for embryonic lymphatic vascular development, via mediating the correct formation of the first lymphovenous contact site and tight association of the lymphatic endothelium with the venous endothelium. Represses PRKCA-mediated L-type voltage-gated channel Ca(2+) influx and ROCK-mediated calcium sensitivity in vascular smooth muscle cells, via its interaction with integrins, thereby inhibiting vasocontraction. Promotes platelet activation, via its interaction with PEAR1 and subsequent activation of AKT/mTOR signaling. Plays a role in epidermal development and keratinocyte differentiation, independent of cell-cell adhesion. May play a role in initial cell attachment of stromal osteogenic cells. May promote myoblast cell adhesion when in the presence of integrin ITGA9:ITGB1. The protein is Sushi, von Willebrand factor type A, EGF and pentraxin domain-containing protein 1 (Svep1) of Rattus norvegicus (Rat).